A 138-amino-acid chain; its full sequence is Putative pre-16S rRNA nuclease (138 aa).

The protein belongs to the YqgF nuclease family.

The protein resides in the cytoplasm. Its function is as follows. Could be a nuclease involved in processing of the 5'-end of pre-16S rRNA. This chain is Putative pre-16S rRNA nuclease, found in Caldicellulosiruptor saccharolyticus (strain ATCC 43494 / DSM 8903 / Tp8T 6331).